Consider the following 248-residue polypeptide: tRNA pseudouridine synthase A (248 aa).

The Nucleophile role is filled by aspartate 53. Tyrosine 111 contacts substrate.

The protein belongs to the tRNA pseudouridine synthase TruA family. Homodimer.

The catalysed reaction is uridine(38/39/40) in tRNA = pseudouridine(38/39/40) in tRNA. Its function is as follows. Formation of pseudouridine at positions 38, 39 and 40 in the anticodon stem and loop of transfer RNAs. This is tRNA pseudouridine synthase A from Listeria monocytogenes serotype 4a (strain HCC23).